A 560-amino-acid chain; its full sequence is Glutamate--tRNA ligase (560 aa).

The 'HIGH' region motif lies at 108 to 118; that stretch reads PNPSGPLHLGH.

This sequence belongs to the class-I aminoacyl-tRNA synthetase family. Glutamate--tRNA ligase type 2 subfamily.

The protein localises to the cytoplasm. It catalyses the reaction tRNA(Glu) + L-glutamate + ATP = L-glutamyl-tRNA(Glu) + AMP + diphosphate. Catalyzes the attachment of glutamate to tRNA(Glu) in a two-step reaction: glutamate is first activated by ATP to form Glu-AMP and then transferred to the acceptor end of tRNA(Glu). In Methanocorpusculum labreanum (strain ATCC 43576 / DSM 4855 / Z), this protein is Glutamate--tRNA ligase.